Reading from the N-terminus, the 239-residue chain is Purine nucleoside phosphorylase DeoD-type (239 aa).

Histidine 5 contacts a purine D-ribonucleoside. Residues glycine 21 and arginine 25 each contribute to the phosphate site. At lysine 27 the chain carries N6-acetyllysine. Phosphate is bound by residues arginine 44 and 88–91 (RVGS). A purine D-ribonucleoside contacts are provided by residues 180–182 (EME) and 204–205 (SD). The active-site Proton donor is aspartate 205.

This sequence belongs to the PNP/UDP phosphorylase family. Homohexamer; trimer of homodimers.

The catalysed reaction is a purine D-ribonucleoside + phosphate = a purine nucleobase + alpha-D-ribose 1-phosphate. It catalyses the reaction a purine 2'-deoxy-D-ribonucleoside + phosphate = a purine nucleobase + 2-deoxy-alpha-D-ribose 1-phosphate. Catalyzes the reversible phosphorolytic breakdown of the N-glycosidic bond in the beta-(deoxy)ribonucleoside molecules, with the formation of the corresponding free purine bases and pentose-1-phosphate. The sequence is that of Purine nucleoside phosphorylase DeoD-type from Shigella dysenteriae serotype 1 (strain Sd197).